The following is a 185-amino-acid chain: Ribosome-recycling factor (185 aa).

A disordered region spans residues 138–160 (AMDKAVKDGEVGEDEGARGEKEL).

It belongs to the RRF family.

It is found in the cytoplasm. Its function is as follows. Responsible for the release of ribosomes from messenger RNA at the termination of protein biosynthesis. May increase the efficiency of translation by recycling ribosomes from one round of translation to another. This Micrococcus luteus (strain ATCC 4698 / DSM 20030 / JCM 1464 / CCM 169 / CCUG 5858 / IAM 1056 / NBRC 3333 / NCIMB 9278 / NCTC 2665 / VKM Ac-2230) (Micrococcus lysodeikticus) protein is Ribosome-recycling factor.